The sequence spans 244 residues: Glucosamine-6-phosphate deaminase (244 aa).

Asp67 acts as the Proton acceptor; for enolization step in catalysis. The For ring-opening step role is filled by Asn136. Residue His138 is the Proton acceptor; for ring-opening step of the active site. Catalysis depends on Glu143, which acts as the For ring-opening step.

Belongs to the glucosamine/galactosamine-6-phosphate isomerase family. NagB subfamily.

It carries out the reaction alpha-D-glucosamine 6-phosphate + H2O = beta-D-fructose 6-phosphate + NH4(+). It participates in amino-sugar metabolism; N-acetylneuraminate degradation; D-fructose 6-phosphate from N-acetylneuraminate: step 5/5. Catalyzes the reversible isomerization-deamination of glucosamine 6-phosphate (GlcN6P) to form fructose 6-phosphate (Fru6P) and ammonium ion. This is Glucosamine-6-phosphate deaminase from Clostridium botulinum (strain 657 / Type Ba4).